The following is a 279-amino-acid chain: Tryptophan synthase alpha chain (279 aa).

Residues glutamate 50 and aspartate 61 each act as proton acceptor in the active site.

Belongs to the TrpA family. Tetramer of two alpha and two beta chains.

It carries out the reaction (1S,2R)-1-C-(indol-3-yl)glycerol 3-phosphate + L-serine = D-glyceraldehyde 3-phosphate + L-tryptophan + H2O. Its pathway is amino-acid biosynthesis; L-tryptophan biosynthesis; L-tryptophan from chorismate: step 5/5. The alpha subunit is responsible for the aldol cleavage of indoleglycerol phosphate to indole and glyceraldehyde 3-phosphate. This Azorhizobium caulinodans (strain ATCC 43989 / DSM 5975 / JCM 20966 / LMG 6465 / NBRC 14845 / NCIMB 13405 / ORS 571) protein is Tryptophan synthase alpha chain.